A 312-amino-acid chain; its full sequence is Nucleosome assembly protein 1-like 4 (312 aa).

A coiled-coil region spans residues Val24–Glu78. The short motif at Leu45–Gln60 is the Nuclear export signal element. The interval Asp289 to Ala312 is disordered.

The protein belongs to the nucleosome assembly protein (NAP) family.

It is found in the nucleus. The protein localises to the cytoplasm. Its function is as follows. May modulate chromatin structure by regulation of nucleosome assembly/disassembly. This is Nucleosome assembly protein 1-like 4 from Oryza sativa subsp. japonica (Rice).